Here is a 175-residue protein sequence, read N- to C-terminus: MSQALTLARPYARAAFAIAREGGKFAPWSDALAFSAQVAGDPRVAALLLNPALHQDQAVTLLAPPAAEADYQRFLGLLADAQRLALLPEIAGLYEQLRAEAEHVVKATVTSATDMSPAELATITAALKKRFGREVDVTTAVDASLIGGAVIDTGEMVIDGSLKGKLARLQNSLAH.

It belongs to the ATPase delta chain family. As to quaternary structure, F-type ATPases have 2 components, F(1) - the catalytic core - and F(0) - the membrane proton channel. F(1) has five subunits: alpha(3), beta(3), gamma(1), delta(1), epsilon(1). F(0) has three main subunits: a(1), b(2) and c(10-14). The alpha and beta chains form an alternating ring which encloses part of the gamma chain. F(1) is attached to F(0) by a central stalk formed by the gamma and epsilon chains, while a peripheral stalk is formed by the delta and b chains.

Its subcellular location is the cell inner membrane. F(1)F(0) ATP synthase produces ATP from ADP in the presence of a proton or sodium gradient. F-type ATPases consist of two structural domains, F(1) containing the extramembraneous catalytic core and F(0) containing the membrane proton channel, linked together by a central stalk and a peripheral stalk. During catalysis, ATP synthesis in the catalytic domain of F(1) is coupled via a rotary mechanism of the central stalk subunits to proton translocation. Functionally, this protein is part of the stalk that links CF(0) to CF(1). It either transmits conformational changes from CF(0) to CF(1) or is implicated in proton conduction. This Xanthomonas campestris pv. campestris (strain 8004) protein is ATP synthase subunit delta.